The following is a 624-amino-acid chain: MLLINFFIAVLGVISLSPIVVARYILRRDCTTVTVLSSPESVTGSNHVQLASYEMCGSTLSASLYVYNDDYDKIVTLYYLTSSGTTGSTLALILPVWSNNWELWTLSAIAAGAVEITGASYVDSDTSVTYTTSLDLPLTTTSASVPTGTAANWRGRSIYQVVTDRFARTDGSITYSCDVTDRVYCGGSYRGIINMLDYIQGMGFTAIWISPIVENIPDDTGYGYAYHGYWMKDIFALNTNFGGADDLIALATELHNRGMYLMVDIVVNHFAFSGNHADVDYSEYFPYSSQDYFHSFCWITDYSNQTNVEECWLGDDSVPLVDVNTQLDTVKSEYQSWVKQLIANYSIDGLRIDTVKHVQMDFWAPFQEAAGIYTVGEVFDGDPSYTCPYQENLDGVLNYPVYYPVVSAFQRVGGSISSLVDMIDTLKSECIDTTLLGSFLENQDNPRFPSYTSDESLIKNAIAFTILSDGIPIIYYGQEQGLNGGNDPYNREALWPTGYSTTSTFYEYIASLNQIRNHAIYIDDTYLTYQNWVIYSDSTTIAMRKGFTGNQIITVLSNLGSSGSSYTLTLSNTGYTASSVVYEILTCTAVTVDLSGNLAVPMSGGLPRVFYPESQLVGSGICSM.

Residues 1-28 form the signal peptide; the sequence is MLLINFFIAVLGVISLSPIVVARYILRR. The CBM21 domain occupies 40–133; that stretch reads ESVTGSNHVQ…SDTSVTYTTS (94 aa). Residues Cys-177 and Cys-185 are joined by a disulfide bond. Residue Trp-230 participates in substrate binding. A Ca(2+)-binding site is contributed by Asn-268. His-269 provides a ligand contact to substrate. A disulfide bridge links Cys-297 with Cys-311. Asn-304 is a glycosylation site (N-linked (GlcNAc...) asparagine). Residues Glu-309 and Asp-322 each contribute to the Ca(2+) site. Asn-344 carries an N-linked (GlcNAc...) asparagine glycan. Arg-351 serves as a coordination point for substrate. Residues Asp-353, His-357, and Glu-377 each contribute to the Ca(2+) site. The Nucleophile role is filled by Asp-353. 356–357 is a binding site for substrate; that stretch reads KH. Glu-377 serves as the catalytic Proton donor. Position 381 (Gly-381) interacts with substrate. Cys-387 and Cys-430 are disulfide-bonded. Residues Asp-444 and Arg-491 each contribute to the substrate site. Cys-587 and Cys-622 are disulfide-bonded.

This sequence belongs to the glycosyl hydrolase 13 family. Requires Ca(2+) as cofactor.

It localises to the secreted. The catalysed reaction is Endohydrolysis of (1-&gt;4)-alpha-D-glucosidic linkages in polysaccharides containing three or more (1-&gt;4)-alpha-linked D-glucose units.. The polypeptide is Alpha-amylase 1 (LKA1) (Lipomyces kononenkoae (Yeast)).